The following is a 198-amino-acid chain: Peptide deformylase (198 aa).

Fe cation-binding residues include Cys123 and His167. Glu168 is an active-site residue. His171 contributes to the Fe cation binding site.

The protein belongs to the polypeptide deformylase family. Requires Fe(2+) as cofactor.

The catalysed reaction is N-terminal N-formyl-L-methionyl-[peptide] + H2O = N-terminal L-methionyl-[peptide] + formate. Its function is as follows. Removes the formyl group from the N-terminal Met of newly synthesized proteins. Requires at least a dipeptide for an efficient rate of reaction. N-terminal L-methionine is a prerequisite for activity but the enzyme has broad specificity at other positions. In Ureaplasma parvum serovar 3 (strain ATCC 27815 / 27 / NCTC 11736), this protein is Peptide deformylase.